The following is a 700-amino-acid chain: Putative cysteine-rich receptor-like protein kinase 30 (700 aa).

Positions 1–24 (MRQNNLFSLIFWLVPVSLIIVVSA) are cleaved as a signal peptide. Gnk2-homologous domains are found at residues 25–129 (QLCS…NQPS) and 135–250 (LESV…LYPF). At 25–285 (QLCSEKFGTF…KDEKTIHTGT (261 aa)) the chain is on the extracellular side. 5 N-linked (GlcNAc...) asparagine glycosylation sites follow: asparagine 63, asparagine 105, asparagine 146, asparagine 150, and asparagine 191. A helical membrane pass occupies residues 286–306 (IIGIVIVVAMVIIMALLALGV). Residues 307–700 (SVCRSRKKYQ…SKSMYRNTED (394 aa)) are Cytoplasmic-facing. The 281-residue stretch at 346-626 (FLASNKIGQG…IFQMLTNSSI (281 aa)) folds into the Protein kinase domain. ATP-binding positions include 352-360 (IGQGGFGEV) and lysine 374. Aspartate 474 (proton acceptor) is an active-site residue. Phosphoserine is present on serine 478. A Phosphothreonine modification is found at threonine 514. The residue at position 522 (tyrosine 522) is a Phosphotyrosine.

The protein belongs to the protein kinase superfamily. Ser/Thr protein kinase family. CRK subfamily.

The protein resides in the membrane. The catalysed reaction is L-seryl-[protein] + ATP = O-phospho-L-seryl-[protein] + ADP + H(+). It carries out the reaction L-threonyl-[protein] + ATP = O-phospho-L-threonyl-[protein] + ADP + H(+). The chain is Putative cysteine-rich receptor-like protein kinase 30 (CRK30) from Arabidopsis thaliana (Mouse-ear cress).